The chain runs to 223 residues: Deoxyribose-phosphate aldolase (223 aa).

The active-site Proton donor/acceptor is the D89. K152 functions as the Schiff-base intermediate with acetaldehyde in the catalytic mechanism. Residue K181 is the Proton donor/acceptor of the active site.

It belongs to the DeoC/FbaB aldolase family. DeoC type 1 subfamily.

It localises to the cytoplasm. It catalyses the reaction 2-deoxy-D-ribose 5-phosphate = D-glyceraldehyde 3-phosphate + acetaldehyde. The protein operates within carbohydrate degradation; 2-deoxy-D-ribose 1-phosphate degradation; D-glyceraldehyde 3-phosphate and acetaldehyde from 2-deoxy-alpha-D-ribose 1-phosphate: step 2/2. Functionally, catalyzes a reversible aldol reaction between acetaldehyde and D-glyceraldehyde 3-phosphate to generate 2-deoxy-D-ribose 5-phosphate. This chain is Deoxyribose-phosphate aldolase, found in Bacillus cereus (strain AH187).